The chain runs to 163 residues: Periplasmic nitrate reductase, electron transfer subunit (163 aa).

The N-terminal stretch at 1–32 (MRSQDPSRRLSRRLWTLFALALCLVTGTVALA) is a signal peptide. Heme c is bound by residues His76, Cys90, Cys93, His94, His111, Cys130, Cys133, and His134.

This sequence belongs to the NapB family. In terms of assembly, component of the periplasmic nitrate reductase NapAB complex composed of NapA and NapB. In terms of processing, binds 2 heme C groups per subunit.

Its subcellular location is the periplasm. Electron transfer subunit of the periplasmic nitrate reductase complex NapAB. Receives electrons from the membrane-anchored tetraheme c-type NapC protein and transfers these to NapA subunit, thus allowing electron flow between membrane and periplasm. Essential for periplasmic nitrate reduction with nitrate as the terminal electron acceptor. The chain is Periplasmic nitrate reductase, electron transfer subunit from Neorhizobium galegae (Rhizobium galegae).